The sequence spans 420 residues: Dihydrolipoyllysine-residue succinyltransferase component of 2-oxoglutarate dehydrogenase complex (420 aa).

Residues 1 to 76 (MAEVKVPELA…EVGQAVAVVG (76 aa)) form the Lipoyl-binding domain. At K42 the chain carries N6-lipoyllysine. Residues 75–201 (VGEGQVNTSN…EKMSRRKKTA (127 aa)) are disordered. Over residues 81–90 (NTSNDSSNES) the composition is skewed to polar residues. The segment covering 91-102 (SQKDEAKEKETP) has biased composition (basic and acidic residues). A compositionally biased stretch (polar residues) spans 103 to 127 (KQSNPNSSESENTQDNSQQRINATP). Residues 124 to 160 (NATPSARRHARKNGVDLSEVSGKGNDVLRKDDVENSQ) enclose the Peripheral subunit-binding (PSBD) domain. Basic and acidic residues predominate over residues 149–158 (DVLRKDDVEN). Residues 159–188 (SQKSSSQTAKSESKSQNSGSKQSNNNPSKP) show a composition bias toward low complexity. Residues H391 and D395 contribute to the active site.

Belongs to the 2-oxoacid dehydrogenase family. Forms a 24-polypeptide structural core with octahedral symmetry. Part of the 2-oxoglutarate dehydrogenase (OGDH) complex composed of E1 (2-oxoglutarate dehydrogenase), E2 (dihydrolipoamide succinyltransferase) and E3 (dihydrolipoamide dehydrogenase); the complex contains multiple copies of the three enzymatic components (E1, E2 and E3). The cofactor is (R)-lipoate.

The enzyme catalyses N(6)-[(R)-dihydrolipoyl]-L-lysyl-[protein] + succinyl-CoA = N(6)-[(R)-S(8)-succinyldihydrolipoyl]-L-lysyl-[protein] + CoA. Its pathway is amino-acid degradation; L-lysine degradation via saccharopine pathway; glutaryl-CoA from L-lysine: step 6/6. Its function is as follows. E2 component of the 2-oxoglutarate dehydrogenase (OGDH) complex which catalyzes the second step in the conversion of 2-oxoglutarate to succinyl-CoA and CO(2). The sequence is that of Dihydrolipoyllysine-residue succinyltransferase component of 2-oxoglutarate dehydrogenase complex (odhB) from Staphylococcus epidermidis (strain ATCC 12228 / FDA PCI 1200).